The sequence spans 183 residues: uncharacterized protein (183 aa).

Residues 27–170 (MIKLIDSARS…VAEIMMQKHL (144 aa)) form the SIS domain.

The protein belongs to the SIS family. PHI subfamily.

This is an uncharacterized protein from Archaeoglobus fulgidus (strain ATCC 49558 / DSM 4304 / JCM 9628 / NBRC 100126 / VC-16).